Reading from the N-terminus, the 69-residue chain is DNA gyrase inhibitor YacG (69 aa).

Residues 1–28 (MSGEGKKHGSNVEPLRPTRPCPECGRPS) form a disordered region. Residues C21, C24, C36, and C40 each contribute to the Zn(2+) site.

The protein belongs to the DNA gyrase inhibitor YacG family. In terms of assembly, interacts with GyrB. The cofactor is Zn(2+).

Its function is as follows. Inhibits all the catalytic activities of DNA gyrase by preventing its interaction with DNA. Acts by binding directly to the C-terminal domain of GyrB, which probably disrupts DNA binding by the gyrase. This is DNA gyrase inhibitor YacG from Sinorhizobium fredii (strain NBRC 101917 / NGR234).